Consider the following 230-residue polypeptide: ATP synthase subunit a (230 aa).

6 helical membrane passes run 26–46, 83–103, 112–132, 143–163, 182–202, and 203–223; these read ANAV…SLIA, FFPL…VGLI, NVNT…VVGI, FMGP…IGHL, LVLM…MMLM, and GVLV…IYIQ.

The protein belongs to the ATPase A chain family. F-type ATPases have 2 components, CF(1) - the catalytic core - and CF(0) - the membrane proton channel. CF(1) has five subunits: alpha(3), beta(3), gamma(1), delta(1), epsilon(1). CF(0) has three main subunits: a(1), b(2) and c(9-12). The alpha and beta chains form an alternating ring which encloses part of the gamma chain. CF(1) is attached to CF(0) by a central stalk formed by the gamma and epsilon chains, while a peripheral stalk is formed by the delta and b chains.

The protein resides in the cell inner membrane. Key component of the proton channel; it plays a direct role in the translocation of protons across the membrane. The sequence is that of ATP synthase subunit a from Trichlorobacter lovleyi (strain ATCC BAA-1151 / DSM 17278 / SZ) (Geobacter lovleyi).